Here is a 685-residue protein sequence, read N- to C-terminus: MDVCVRLALWLLWGLLLHQGQSLSHSHSEKATGTSSGANSEESTAAEFCRIDKPLCHSEDEKLSFEAVRNIHKLMDDDANGDVDVEESDEFLREDLNYHDPTVKHSTFHGEDKLISVEDLWKAWKSSEVYNWTVDEVVQWLITYVELPQYEETFRKLQLSGHAMPRLAVTNTTMTGTVLKMTDRSHRQKLQLKALDTVLFGPPLLTRHNHLKDFMLVVSIVIGVGGCWFAYIQNRYSKEHMKKMMKDLEGLHRAEQSLHDLQERLHKAQEEHRTVEVEKVHLEKKLRDEINLAKQEAQRLKELREGTENERSRQKYAEEELEQVREALRKAEKELESHSSWYAPEALQKWLQLTHEVEVQYYNIKKQNAEKQLLVAKEGAEKIKKKRNTLFGTFHVAHSSSLDDVDHKILTAKQALSEVTAALRERLHRWQQIEILCGFQIVNNPGIHSLVAALNIDPSWMGSTRPNPAHFIMTDDVDDMDEEIVSPLSMQSPSLQSSVRQRLTEPQHGLGSQRDLTHSDSESSLHMSDRQRVAPKPPQMSRAADEALNAMTSNGSHRLIEGVHPGSLVEKLPDSPALAKKALLALNHGLDKAHSLMELSPSAPPGGSPHLDSSRSHSPSSPDPDTPSPVGDSRALQASRNTRIPHLAGKKAVAEEDNGSIGEETDSSPGRKKFPLKIFKKPLKK.

The signal sequence occupies residues 1–22; it reads MDVCVRLALWLLWGLLLHQGQS. Residues 23-213 lie on the Extracellular side of the membrane; that stretch reads LSHSHSEKAT…LLTRHNHLKD (191 aa). 2 consecutive EF-hand domains span residues 64–97 and 102–126; these read SFEA…EDLN and TVKH…AWKS. The Ca(2+) site is built by Asp-76, Asp-78, Asn-80, Asp-82, and Glu-87. Asn-131 and Asn-171 each carry an N-linked (GlcNAc...) asparagine glycan. An SAM domain is found at 132 to 200; that stretch reads WTVDEVVQWL…QLKALDTVLF (69 aa). A helical transmembrane segment spans residues 214–234; the sequence is FMLVVSIVIGVGGCWFAYIQN. Residues 235–685 are Cytoplasmic-facing; that stretch reads RYSKEHMKKM…LKIFKKPLKK (451 aa). A coiled-coil region spans residues 248-442; the sequence is LEGLHRAEQS…IEILCGFQIV (195 aa). A Phosphoserine modification is found at Ser-257. The interval 344–442 is SOAR/CAD; that stretch reads PEALQKWLQL…IEILCGFQIV (99 aa). Residues 475-483 form a contributes to fast Ca(2+)-dependent inactivation of CRAC channels region; sequence DDVDDMDEE. Residues 490–499 are compositionally biased toward low complexity; the sequence is MQSPSLQSSV. The interval 490-542 is disordered; that stretch reads MQSPSLQSSVRQRLTEPQHGLGSQRDLTHSDSESSLHMSDRQRVAPKPPQMSR. Residue Thr-504 is modified to Phosphothreonine. Ser-512 carries the phosphoserine modification. Over residues 515-532 the composition is skewed to basic and acidic residues; it reads DLTHSDSESSLHMSDRQR. At Thr-517 the chain carries Phosphothreonine. A phosphoserine mark is found at Ser-519, Ser-521, Ser-523, Ser-524, Ser-567, Ser-575, Ser-602, Ser-608, Ser-618, Ser-621, and Ser-628. Residues 596–685 form a disordered region; sequence LMELSPSAPP…LKIFKKPLKK (90 aa). Residues 608-620 show a composition bias toward low complexity; that stretch reads SPHLDSSRSHSPS. Residues 642–645 carry the Microtubule tip localization signal motif; that stretch reads TRIP. Acidic residues predominate over residues 655–666; that stretch reads EEDNGSIGEETD. At Ser-660 the chain carries Phosphoserine. Thr-665 carries the post-translational modification Phosphothreonine. Ser-668 carries the phosphoserine modification. The span at 670–685 shows a compositional bias: basic residues; it reads GRKKFPLKIFKKPLKK. Residues 672-685 are required for generation of inwardly rectifying CRAC currents; it reads KKFPLKIFKKPLKK.

In terms of assembly, monomer in the presence of Ca(2+); it oligomerizes in absence of Ca(2+). Forms homooligomers and heterooligomers with STIM2. Interacts with pore-forming subunits of CRAC channels, ORAI1, ORAI2 and ORAI3; this interaction is potentiated upon Ca(2+) store depletion. Interacts (via the transmembrane region and the SOAR/CAD domain) with SPPL3; the interaction promotes the binding of STIM1 to ORAI1. Interacts (via the SOAR/CAD domain) with ORAI1. Interacts with MAPRE1; probably required for targeting to the growing microtubule plus ends. Interacts with CRACR2A/EFCAB4B; the interaction is direct and takes place in absence of Ca(2+). Forms a complex with CRACR2A/EFCAB4B and ORAI1 at low concentration of Ca(2+), the complex dissociates at elevated Ca(2+) concentrations. Interacts with SARAF, promoting a slow inactivation of STIM1-dependent SOCE activity, possibly by facilitating the deoligomerization of STIM1. Interacts with EFHB; the interaction takes place upon Ca(2+)-store depletion and inhibits the association with SARAF. Interacts with ASPH (isoform 8). Interacts with SLC35G1; intracellular Ca(2+)-dependent. May interact with ATP1A1, ATP2A2, ATP2B1, ATP2B4, KPNB1 and XPO1; through SLC35G1. Interacts with TMEM203. Interacts with STIMATE, promoting STIM1 conformational switch. Interacts with TMEM178A. Interacts with CASQ1 (via C-terminal end and preferentially with the monomeric form); this interaction increases in response to a depletion of intracellular Ca(2+), decreases both STIM1 aggregation and clustering, interaction of STIM1 with ORAI1 and store-operated Ca(2+) entry (SOCE) activity. Interacts with ADCY8. Glycosylation is required for cell surface expression. In terms of processing, phosphorylated predominantly on Ser residues. Ubiquitously expressed in various human primary cells and tumor cell lines.

The protein resides in the cell membrane. The protein localises to the endoplasmic reticulum membrane. It is found in the cytoplasm. Its subcellular location is the cytoskeleton. It localises to the sarcoplasmic reticulum. Acts as a Ca(2+) sensor that gates two major inward rectifying Ca(2+) channels at the plasma membrane: Ca(2+) release-activated Ca(2+) (CRAC) channels and arachidonate-regulated Ca(2+)-selective (ARC) channels. Plays a role in mediating store-operated Ca(2+) entry (SOCE), a Ca(2+) influx following depletion of intracellular Ca(2+) stores. Upon Ca(2+) depletion, translocates from the endoplasmic reticulum to the plasma membrane where it activates CRAC channel pore-forming subunits ORA1, ORA2 and ORAI3 to generate sustained and oscillatory Ca(2+) entry. Involved in enamel formation. The polypeptide is Stromal interaction molecule 1 (STIM1) (Homo sapiens (Human)).